Consider the following 226-residue polypeptide: Neuromodulin (226 aa).

A disordered region spans residues 1 to 226; the sequence is MLCCMRRTKQ…EDPEADQEHA (226 aa). S-palmitoyl cysteine attachment occurs at residues Cys-3 and Cys-4. The span at 9 to 32 shows a compositional bias: basic and acidic residues; the sequence is KQVEKNDEDQKIEQDGVKPEDKAH. An IQ domain is found at 31–60; that stretch reads AHKAATKIQASFRGHITRKKLKDEKKGDAP. Ser-41 is modified (phosphoserine; by PHK and PKC). Positions 51-84 are enriched in basic and acidic residues; that stretch reads LKDEKKGDAPAAEAEAKEKDDAPVADGVEKKEGD. The span at 85–97 shows a compositional bias: low complexity; it reads GSATTDAAPATSP. Phosphoserine occurs at positions 86 and 96. Residues 98 to 127 are compositionally biased toward basic and acidic residues; it reads KAEEPSKAGDAPSEEKKGEGDAAPSEEKAG. The span at 128–139 shows a compositional bias: low complexity; it reads SAETESAAKATT. Phosphoserine is present on residues Ser-142, Ser-144, and Ser-145. Basic and acidic residues predominate over residues 146-158; the sequence is KAEDGPAKEEPKQ. Over residues 159–192 the composition is skewed to low complexity; it reads ADVPAAVTDAAATTPAAEDAAKAAQPPTETAESS. At Thr-172 the chain carries Phosphothreonine. Phosphoserine occurs at positions 191 and 192. Basic and acidic residues predominate over residues 201–214; it reads VDEAKPKESARQDE. Residues 215-226 are compositionally biased toward acidic residues; sequence GKEDPEADQEHA.

This sequence belongs to the neuromodulin family. In terms of assembly, identified in a complex containing FGFR4, NCAM1, CDH2, PLCG1, FRS2, SRC, SHC1, GAP43 and CTTN. Interacts (via IQ domain) with calmodulin. Binds calmodulin with a greater affinity in the absence of Ca(2+) than in its presence. Post-translationally, phosphorylated. Phosphorylation of this protein by a protein kinase C is specifically correlated with certain forms of synaptic plasticity. In terms of processing, palmitoylated by ZDHHC3. Palmitoylation is regulated by ARF6 and is essential for plasma membrane association and axonal and dendritic filopodia induction. Deacylated by LYPLA2. In terms of tissue distribution, expressed in hippocampal neurons, with highest levels of expression in the CA4 and CA3 neurons and lower levels in CA1 neurons. Expressed in the dorsal root ganglion.

The protein localises to the cell membrane. The protein resides in the cell projection. It is found in the growth cone. It localises to the growth cone membrane. Its subcellular location is the synapse. The protein localises to the filopodium membrane. The protein resides in the perikaryon. It is found in the dendrite. It localises to the axon. Its subcellular location is the cytoplasm. Its function is as follows. This protein is associated with nerve growth. It is a major component of the motile 'growth cones' that form the tips of elongating axons. Plays a role in axonal and dendritic filopodia induction. The polypeptide is Neuromodulin (Gap43) (Rattus norvegicus (Rat)).